Reading from the N-terminus, the 615-residue chain is Ectoine/glycine betaine/proline transporter EctP (615 aa).

The next 12 helical transmembrane spans lie at 24–44 (FIFS…IALG), 62–82 (LGWM…GIFA), 102–122 (IVWF…FWGV), 156–176 (FGIH…YFIY), 207–227 (LAIV…VLQI), 240–260 (VSWV…ISVA), 275–295 (IAMA…LTLL), 329–349 (WTVF…MFVA), 360–380 (FIGG…SIFG), 417–437 (LTGI…ITSI), 463–483 (WACT…SSGI), and 489–509 (VVII…FSLL). Disordered regions lie at residues 524-562 (TRQW…LEHD) and 589-615 (PEEA…EYDI). Composition is skewed to basic and acidic residues over residues 526–540 (QWEK…EEHS) and 600–615 (KIVE…EYDI).

It belongs to the BCCT transporter (TC 2.A.15) family.

Its subcellular location is the cell membrane. Involved in the uptake of osmoprotectants. Can transport ectoine, proline and glycine betaine. Na(+) is probably the coupling ion. The protein is Ectoine/glycine betaine/proline transporter EctP of Corynebacterium glutamicum (strain ATCC 13032 / DSM 20300 / JCM 1318 / BCRC 11384 / CCUG 27702 / LMG 3730 / NBRC 12168 / NCIMB 10025 / NRRL B-2784 / 534).